Reading from the N-terminus, the 553-residue chain is CTP synthase (553 aa).

The amidoligase domain stretch occupies residues 1–275 (MPTETEYDPS…DQYVMEQFDM (275 aa)). CTP is bound at residue Ser24. A UTP-binding site is contributed by Ser24. Residue 25–30 (GLGKGI) coordinates ATP. L-glutamine is bound at residue Tyr65. Residue Asp82 participates in ATP binding. Residues Asp82 and Glu150 each contribute to the Mg(2+) site. Residues 157–159 (DIE), 196–201 (KTKPTQ), and Lys232 contribute to the CTP site. UTP is bound by residues 196–201 (KTKPTQ) and Lys232. The Glutamine amidotransferase type-1 domain occupies 308–540 (KYALEDAYMS…LDAVLERADV (233 aa)). Position 362 (Gly362) interacts with L-glutamine. The active-site Nucleophile; for glutamine hydrolysis is the Cys389. L-glutamine is bound by residues 390 to 393 (LGFQ), Glu413, and Arg470. Catalysis depends on residues His513 and Glu515.

It belongs to the CTP synthase family. As to quaternary structure, homotetramer.

The enzyme catalyses UTP + L-glutamine + ATP + H2O = CTP + L-glutamate + ADP + phosphate + 2 H(+). It catalyses the reaction L-glutamine + H2O = L-glutamate + NH4(+). The catalysed reaction is UTP + NH4(+) + ATP = CTP + ADP + phosphate + 2 H(+). The protein operates within pyrimidine metabolism; CTP biosynthesis via de novo pathway; CTP from UDP: step 2/2. Its activity is regulated as follows. Allosterically activated by GTP, when glutamine is the substrate; GTP has no effect on the reaction when ammonia is the substrate. The allosteric effector GTP functions by stabilizing the protein conformation that binds the tetrahedral intermediate(s) formed during glutamine hydrolysis. Inhibited by the product CTP, via allosteric rather than competitive inhibition. Functionally, catalyzes the ATP-dependent amination of UTP to CTP with either L-glutamine or ammonia as the source of nitrogen. Regulates intracellular CTP levels through interactions with the four ribonucleotide triphosphates. The polypeptide is CTP synthase (Halobacterium salinarum (strain ATCC 29341 / DSM 671 / R1)).